We begin with the raw amino-acid sequence, 425 residues long: Histone-binding protein RBBP4-A (425 aa).

A2 is subject to N-acetylalanine. 7 WD repeats span residues 32 to 125 (YDLV…THDG), 126 to 175 (EVNR…RLRG), 176 to 223 (HQKE…KTIF), 225 to 270 (GHTA…HSVD), 271 to 314 (AHTA…HSFE), 315 to 371 (SHKD…FIHG), and 372 to 404 (GHTA…VWQM).

Belongs to the WD repeat RBAP46/RBAP48/MSI1 family. In terms of assembly, binds directly to histone H4, probably via helix 1 of the histone fold, a region that is not accessible when histone H4 is in chromatin. Probably forms a large corepressor complex that contains ncor1, sin3a, hdac1-A and/or hdac1-B, hdac2, rbbp4-A and/or rbbp4-B and possibly rbbp7.

Its subcellular location is the nucleus. The protein resides in the chromosome. It is found in the telomere. Its function is as follows. Core histone-binding subunit that may target chromatin assembly factors, chromatin remodeling factors and histone deacetylases to their histone substrates in a manner that is regulated by nucleosomal DNA. Component of several complexes which regulate chromatin metabolism. The sequence is that of Histone-binding protein RBBP4-A (rbbp4-a) from Xenopus laevis (African clawed frog).